Consider the following 1027-residue polypeptide: Presequence protease, mitochondrial (1027 aa).

Residues 1 to 22 (MIRQCRAGLRLCRALYQTSYRW) constitute a mitochondrion transit peptide. H98 provides a ligand contact to Zn(2+). The active-site Proton acceptor is the E101. Zn(2+) contacts are provided by H102 and E199. Cysteines 113 and 550 form a disulfide. Positions 800 to 829 (KKERKSIRPHVVEKSSSPSSSGSEISRRAT) are disordered. Low complexity predominate over residues 814-823 (SSSPSSSGSE).

This sequence belongs to the peptidase M16 family. PreP subfamily. In terms of assembly, monomer and homodimer; homodimerization is induced by binding of the substrate. Zn(2+) is required as a cofactor. Post-translationally, a disulfide bond locks the enzyme in the closed conformation preventing substrate entry into the catalytic chamber.

The protein localises to the mitochondrion matrix. With respect to regulation, mainly exists in a closed and catalytically competent conformation but a closed-to-open switch allows substrate entry into the catalytic chamber. Substrate binding induces closure and dimerization. A disulfide bond may lock the enzyme in a closed conformation preventing substrate entry into the catalytic chamber, participating in redox regulation of the enzyme. Inhibited by metal-chelating agents. Inhibited by nickel and zinc excess, and slightly activated by manganese. Metalloendopeptidase of the mitochondrial matrix that functions in peptide cleavage and degradation rather than in protein processing. Has an ATP-independent activity. Specifically cleaves peptides in the range of 5 to 65 residues. Shows a preference for cleavage after small polar residues and before basic residues, but without any positional preference. Degrades the transit peptides of mitochondrial proteins after their cleavage. Also degrades other unstructured peptides. This is Presequence protease, mitochondrial (pitrm1) from Xenopus tropicalis (Western clawed frog).